A 393-amino-acid chain; its full sequence is CCA-adding enzyme (393 aa).

ATP-binding residues include glycine 27 and arginine 30. CTP is bound by residues glycine 27 and arginine 30. Residues aspartate 40 and aspartate 42 each coordinate Mg(2+). ATP contacts are provided by arginine 111, aspartate 154, arginine 157, arginine 160, and arginine 163. Residues arginine 111, aspartate 154, arginine 157, arginine 160, and arginine 163 each coordinate CTP.

Belongs to the tRNA nucleotidyltransferase/poly(A) polymerase family. Bacterial CCA-adding enzyme type 3 subfamily. In terms of assembly, homodimer. Mg(2+) is required as a cofactor.

It catalyses the reaction a tRNA precursor + 2 CTP + ATP = a tRNA with a 3' CCA end + 3 diphosphate. It carries out the reaction a tRNA with a 3' CCA end + 2 CTP + ATP = a tRNA with a 3' CCACCA end + 3 diphosphate. Its function is as follows. Catalyzes the addition and repair of the essential 3'-terminal CCA sequence in tRNAs without using a nucleic acid template. Adds these three nucleotides in the order of C, C, and A to the tRNA nucleotide-73, using CTP and ATP as substrates and producing inorganic pyrophosphate. tRNA 3'-terminal CCA addition is required both for tRNA processing and repair. Also involved in tRNA surveillance by mediating tandem CCA addition to generate a CCACCA at the 3' terminus of unstable tRNAs. While stable tRNAs receive only 3'-terminal CCA, unstable tRNAs are marked with CCACCA and rapidly degraded. The polypeptide is CCA-adding enzyme (Listeria monocytogenes serotype 4a (strain HCC23)).